The following is a 402-amino-acid chain: Phosphoglycerate kinase (402 aa).

Residues 24–26 (DFN), R40, 63–66 (HFGR), R122, and R155 each bind substrate. ATP is bound by residues K206, G297, E328, and 358 to 361 (GGDS).

This sequence belongs to the phosphoglycerate kinase family. In terms of assembly, monomer.

It is found in the cytoplasm. The catalysed reaction is (2R)-3-phosphoglycerate + ATP = (2R)-3-phospho-glyceroyl phosphate + ADP. Its pathway is carbohydrate degradation; glycolysis; pyruvate from D-glyceraldehyde 3-phosphate: step 2/5. In Prochlorococcus marinus (strain AS9601), this protein is Phosphoglycerate kinase.